Consider the following 183-residue polypeptide: BLOC-1-related complex subunit 8 homolog (183 aa).

Residues 152–183 (MIGPGTATGRTEAQAATSSNPGELQRSYTTLH) form a disordered region. Residues 159-183 (TGRTEAQAATSSNPGELQRSYTTLH) are compositionally biased toward polar residues.

Belongs to the BORCS8 family.

The protein resides in the lysosome membrane. In terms of biological role, may participate in the coupling of lysosomes to microtubule plus-end-directed kinesin motor. This is BLOC-1-related complex subunit 8 homolog from Drosophila melanogaster (Fruit fly).